The sequence spans 243 residues: Phosphoribosylaminoimidazole-succinocarboxamide synthase (243 aa).

Belongs to the SAICAR synthetase family.

The catalysed reaction is 5-amino-1-(5-phospho-D-ribosyl)imidazole-4-carboxylate + L-aspartate + ATP = (2S)-2-[5-amino-1-(5-phospho-beta-D-ribosyl)imidazole-4-carboxamido]succinate + ADP + phosphate + 2 H(+). It participates in purine metabolism; IMP biosynthesis via de novo pathway; 5-amino-1-(5-phospho-D-ribosyl)imidazole-4-carboxamide from 5-amino-1-(5-phospho-D-ribosyl)imidazole-4-carboxylate: step 1/2. The polypeptide is Phosphoribosylaminoimidazole-succinocarboxamide synthase (Lactiplantibacillus plantarum (strain ATCC BAA-793 / NCIMB 8826 / WCFS1) (Lactobacillus plantarum)).